The sequence spans 329 residues: 4-hydroxythreonine-4-phosphate dehydrogenase (329 aa).

The substrate site is built by His136 and Thr137. Residues His166, His211, and His266 each coordinate a divalent metal cation. Residues Lys274, Asn283, and Arg292 each contribute to the substrate site.

The protein belongs to the PdxA family. As to quaternary structure, homodimer. Requires Zn(2+) as cofactor. It depends on Mg(2+) as a cofactor. The cofactor is Co(2+).

It localises to the cytoplasm. The catalysed reaction is 4-(phosphooxy)-L-threonine + NAD(+) = 3-amino-2-oxopropyl phosphate + CO2 + NADH. Its pathway is cofactor biosynthesis; pyridoxine 5'-phosphate biosynthesis; pyridoxine 5'-phosphate from D-erythrose 4-phosphate: step 4/5. Catalyzes the NAD(P)-dependent oxidation of 4-(phosphooxy)-L-threonine (HTP) into 2-amino-3-oxo-4-(phosphooxy)butyric acid which spontaneously decarboxylates to form 3-amino-2-oxopropyl phosphate (AHAP). This chain is 4-hydroxythreonine-4-phosphate dehydrogenase, found in Neisseria meningitidis serogroup B (strain ATCC BAA-335 / MC58).